A 158-amino-acid chain; its full sequence is MSGAGAPGAAERIDGTGLRVVIVAGAWHEEIANGLIAGAERTLEAAGASWSIARVPGSFELPVASKAALEAGADAVVALGVIIRGGTPHFEYVSAAATDGLTRVALNTGKPVGFGVLTLDDEAQGLDRAGLPGSTEDKGAEAAHAALATAVALRALRG.

5-amino-6-(D-ribitylamino)uracil contacts are provided by residues Trp27, 58–60 (SFE), and 81–83 (VII). 86-87 (GT) serves as a coordination point for (2S)-2-hydroxy-3-oxobutyl phosphate. Residue His89 is the Proton donor of the active site. Phe114 lines the 5-amino-6-(D-ribitylamino)uracil pocket. Arg128 serves as a coordination point for (2S)-2-hydroxy-3-oxobutyl phosphate.

This sequence belongs to the DMRL synthase family.

The catalysed reaction is (2S)-2-hydroxy-3-oxobutyl phosphate + 5-amino-6-(D-ribitylamino)uracil = 6,7-dimethyl-8-(1-D-ribityl)lumazine + phosphate + 2 H2O + H(+). Its pathway is cofactor biosynthesis; riboflavin biosynthesis; riboflavin from 2-hydroxy-3-oxobutyl phosphate and 5-amino-6-(D-ribitylamino)uracil: step 1/2. Its function is as follows. Catalyzes the formation of 6,7-dimethyl-8-ribityllumazine by condensation of 5-amino-6-(D-ribitylamino)uracil with 3,4-dihydroxy-2-butanone 4-phosphate. This is the penultimate step in the biosynthesis of riboflavin. The chain is 6,7-dimethyl-8-ribityllumazine synthase from Leifsonia xyli subsp. xyli (strain CTCB07).